The following is a 314-amino-acid chain: Ornithine carbamoyltransferase (314 aa).

Carbamoyl phosphate is bound by residues 58–61 (STRT), Gln-85, Arg-109, and 136–139 (HPLQ). L-ornithine contacts are provided by residues Asn-168, Asp-232, and 236 to 237 (SM). Carbamoyl phosphate-binding positions include 272–273 (CL) and Arg-300.

This sequence belongs to the aspartate/ornithine carbamoyltransferase superfamily. OTCase family.

It is found in the cytoplasm. It carries out the reaction carbamoyl phosphate + L-ornithine = L-citrulline + phosphate + H(+). It participates in amino-acid biosynthesis; L-arginine biosynthesis; L-arginine from L-ornithine and carbamoyl phosphate: step 1/3. In terms of biological role, reversibly catalyzes the transfer of the carbamoyl group from carbamoyl phosphate (CP) to the N(epsilon) atom of ornithine (ORN) to produce L-citrulline. This chain is Ornithine carbamoyltransferase, found in Hyperthermus butylicus (strain DSM 5456 / JCM 9403 / PLM1-5).